Here is a 121-residue protein sequence, read N- to C-terminus: Large ribosomal subunit protein eL31 (121 aa).

Belongs to the eukaryotic ribosomal protein eL31 family.

This is Large ribosomal subunit protein eL31 (RPL31) from Panax ginseng (Korean ginseng).